The following is a 634-amino-acid chain: Probable potassium transport system protein Kup 2 (634 aa).

A run of 12 helical transmembrane segments spans residues 20-40 (FWTLALGSIGVVYGDIGTSPL), 64-84 (VLSLMLWTLLIIVTLKYVLLI), 110-130 (FAAISLLGMAGAALFYGDAII), 148-168 (PGFDPYILPLSMAILVGLFLV), 174-194 (AAVATWFGPLMLIWFGLMAVA), 224-244 (AGLLALGAVFLTVTGAEALYA), 258-278 (WLVLVFPALALCYLGQGAMLL), 290-310 (LLFPDWALLPMVWIATGATII), 348-368 (IYIPRANWLLLIAVLYLVFAF), 377-397 (AYGIAVTGTMVLTSIMAFFVM), 405-425 (AAVATAIIVPFLIIDLIFLMA), and 430-450 (IVDGGWIPLMIGVGLMGVMVT).

The protein belongs to the HAK/KUP transporter (TC 2.A.72) family.

The protein localises to the cell inner membrane. It catalyses the reaction K(+)(in) + H(+)(in) = K(+)(out) + H(+)(out). Functionally, transport of potassium into the cell. Likely operates as a K(+):H(+) symporter. The sequence is that of Probable potassium transport system protein Kup 2 from Rhodopseudomonas palustris (strain ATCC BAA-98 / CGA009).